Here is a 276-residue protein sequence, read N- to C-terminus: Transmembrane protein 81 (276 aa).

The first 24 residues, 1–24 (MKTSATSFIPGSLVLAFCLPVVAT), serve as a signal peptide directing secretion. Residues 25-225 (SPKTLAIPEK…QHPPWKKKVA (201 aa)) lie on the Extracellular side of the membrane. A glycan (N-linked (GlcNAc...) asparagine) is linked at Asn-45. An Ig-like domain is found at 83 to 176 (TNWLCGMLHF…NLRLVKRLYF (94 aa)). Cys-104 and Cys-160 are disulfide-bonded. Asn-211 carries an N-linked (GlcNAc...) asparagine glycan. The helical transmembrane segment at 226-246 (IAVGIGVAGGVTGGVLVSIVL) threads the bilayer. Residues 247-276 (CGRLSVIHSSASLETLQALLPKGGMLRKPD) lie on the Cytoplasmic side of the membrane.

In terms of assembly, forms a complex with IZUMO1 and SPACA6 on spermatocyte cell membrane required for fertilization.

It is found in the cell membrane. Its function is as follows. Essential fertilization factor required for male fertility. Part of a conserved trimeric sperm complex with the essential fertilization factors IZUMO1 and SPACA6 which bridges sperm and oocyte membranes during fertilization by binding to IZUMO1R/JUNO on the oocyte. The chain is Transmembrane protein 81 (TMEM81) from Bos taurus (Bovine).